The following is a 200-amino-acid chain: Small ribosomal subunit protein uS2 (200 aa).

The protein belongs to the universal ribosomal protein uS2 family.

In Picrophilus torridus (strain ATCC 700027 / DSM 9790 / JCM 10055 / NBRC 100828 / KAW 2/3), this protein is Small ribosomal subunit protein uS2.